Consider the following 480-residue polypeptide: Probable pectin lyase F-2 (480 aa).

An N-terminal signal peptide occupies residues 1 to 25 (MTLIRTVLMAAALLGASAHAQGVVG). Cys83 and Cys106 are disulfide-bonded. Asn111 is a glycosylation site (N-linked (GlcNAc...) asparagine). The active site involves Arg256. An intrachain disulfide couples Cys322 to Cys330. Positions 386–401 (SSSAIPSSTPAPSSSA) are enriched in low complexity. Positions 386–436 (SSSAIPSSTPAPSSSALAKRHGGHDRHGLGHIPHLTEGGPGAWHTPGPAPS) are disordered.

Belongs to the polysaccharide lyase 1 family.

The protein resides in the secreted. It catalyses the reaction Eliminative cleavage of (1-&gt;4)-alpha-D-galacturonan methyl ester to give oligosaccharides with 4-deoxy-6-O-methyl-alpha-D-galact-4-enuronosyl groups at their non-reducing ends.. In terms of biological role, pectinolytic enzymes consist of four classes of enzymes: pectin lyase, polygalacturonase, pectin methylesterase and rhamnogalacturonase. Among pectinolytic enzymes, pectin lyase is the most important in depolymerization of pectin, since it cleaves internal glycosidic bonds of highly methylated pectins. This is Probable pectin lyase F-2 (pelF-2) from Aspergillus terreus (strain NIH 2624 / FGSC A1156).